Here is a 428-residue protein sequence, read N- to C-terminus: Histidine--tRNA ligase (428 aa).

Belongs to the class-II aminoacyl-tRNA synthetase family. In terms of assembly, homodimer.

It is found in the cytoplasm. The enzyme catalyses tRNA(His) + L-histidine + ATP = L-histidyl-tRNA(His) + AMP + diphosphate + H(+). The protein is Histidine--tRNA ligase of Bordetella bronchiseptica (strain ATCC BAA-588 / NCTC 13252 / RB50) (Alcaligenes bronchisepticus).